Consider the following 105-residue polypeptide: MAAKIRREDEVIVLTGKDKGKRGKVTKVLVEQGKVIVEGINVKKKHQKPVPALGVAGGIVSKEAAVDVSNVALFNPATGKGDRVGFRFEDGNKVRFFKSNGELVK.

The protein belongs to the universal ribosomal protein uL24 family. In terms of assembly, part of the 50S ribosomal subunit.

One of two assembly initiator proteins, it binds directly to the 5'-end of the 23S rRNA, where it nucleates assembly of the 50S subunit. Its function is as follows. One of the proteins that surrounds the polypeptide exit tunnel on the outside of the subunit. This Tolumonas auensis (strain DSM 9187 / NBRC 110442 / TA 4) protein is Large ribosomal subunit protein uL24.